The following is a 353-amino-acid chain: 3-dehydroquinate synthase (353 aa).

Residues 60–65, 94–98, 118–119, Lys131, and Lys140 contribute to the NAD(+) site; these read AGDMNK, GMITD, and TT. 3 residues coordinate Zn(2+): Glu173, His234, and His253.

The protein belongs to the sugar phosphate cyclases superfamily. Dehydroquinate synthase family. NAD(+) serves as cofactor. The cofactor is Co(2+). Requires Zn(2+) as cofactor.

Its subcellular location is the cytoplasm. It catalyses the reaction 7-phospho-2-dehydro-3-deoxy-D-arabino-heptonate = 3-dehydroquinate + phosphate. It participates in metabolic intermediate biosynthesis; chorismate biosynthesis; chorismate from D-erythrose 4-phosphate and phosphoenolpyruvate: step 2/7. In terms of biological role, catalyzes the conversion of 3-deoxy-D-arabino-heptulosonate 7-phosphate (DAHP) to dehydroquinate (DHQ). This chain is 3-dehydroquinate synthase, found in Parabacteroides distasonis (strain ATCC 8503 / DSM 20701 / CIP 104284 / JCM 5825 / NCTC 11152).